A 426-amino-acid chain; its full sequence is Tyrosine--tRNA ligase (426 aa).

Residue Tyr35 participates in L-tyrosine binding. The 'HIGH' region signature appears at 40-49; it reads PTAPSLHIGH. 2 residues coordinate L-tyrosine: Tyr174 and Gln178. Positions 234–238 match the 'KMSKS' region motif; sequence KFGKT. Position 237 (Lys237) interacts with ATP. The S4 RNA-binding domain maps to 358 to 418; sequence PRVVDALVAT…WAVIRRGRRA (61 aa).

It belongs to the class-I aminoacyl-tRNA synthetase family. TyrS type 1 subfamily. Homodimer.

The protein localises to the cytoplasm. The enzyme catalyses tRNA(Tyr) + L-tyrosine + ATP = L-tyrosyl-tRNA(Tyr) + AMP + diphosphate + H(+). Its function is as follows. Catalyzes the attachment of tyrosine to tRNA(Tyr) in a two-step reaction: tyrosine is first activated by ATP to form Tyr-AMP and then transferred to the acceptor end of tRNA(Tyr). The polypeptide is Tyrosine--tRNA ligase (Acidothermus cellulolyticus (strain ATCC 43068 / DSM 8971 / 11B)).